Consider the following 346-residue polypeptide: Cytosolic sulfotransferase 17 (346 aa).

89-94 (KTGTTW) lines the 3'-phosphoadenylyl sulfate pocket. His151 acts as the Proton acceptor in catalysis. 3'-phosphoadenylyl sulfate-binding positions include Arg173, Ser181, Tyr239, and 309–311 (RKG).

It belongs to the sulfotransferase 1 family. As to expression, highly expressed in roots, stems and mature leaves. Low expression in young leaves and flowers. Barely detected in siliques.

It localises to the cytoplasm. It carries out the reaction an aliphatic (Z)-desulfo-glucosinolate + 3'-phosphoadenylyl sulfate = a (Z)-omega-(methylsulfanyl)-N-sulfo-alkylhydroximate S-glucoside + adenosine 3',5'-bisphosphate + H(+). With respect to regulation, inhibited by phosphoadenosine 5'-phosphate (PAP). Its function is as follows. Sulfotransferase that utilizes 3'-phospho-5'-adenylyl sulfate (PAPS) as sulfonate donor to catalyze the sulfate conjugation of desulfo-glucosinolates (dsGSs), the final step in the biosynthesis of the glucosinolate core structure. Substrate preference is desulfo-benzyl glucosinolate &gt; desulfo-6-methylthiohexyl glucosinolate. Increased specific activity with increasing chain length of desulfo-glucosinolate derived from methionine. Preferred substrate is desulfo-8-methylthiooctyl glucosinolate. The chain is Cytosolic sulfotransferase 17 (SOT17) from Arabidopsis thaliana (Mouse-ear cress).